The following is a 119-amino-acid chain: Ribonuclease (119 aa).

Residues Lys-6 and Arg-9 each coordinate substrate. Residue His-11 is the Proton acceptor of the active site. Disulfide bonds link Cys-26–Cys-81, Cys-40–Cys-92, and Cys-58–Cys-107. Substrate-binding positions include 41-45 (KFTNT) and Arg-82. The Proton donor role is filled by His-114.

It belongs to the pancreatic ribonuclease family. Monomer. Interacts with and forms tight 1:1 complexes with RNH1. Dimerization of two such complexes may occur. Interaction with RNH1 inhibits this protein. As to expression, pancreas.

It localises to the secreted. It carries out the reaction an [RNA] containing cytidine + H2O = an [RNA]-3'-cytidine-3'-phosphate + a 5'-hydroxy-ribonucleotide-3'-[RNA].. It catalyses the reaction an [RNA] containing uridine + H2O = an [RNA]-3'-uridine-3'-phosphate + a 5'-hydroxy-ribonucleotide-3'-[RNA].. Its function is as follows. Endonuclease that catalyzes the cleavage of RNA on the 3' side of pyrimidine nucleotides. Acts on single-stranded and double-stranded RNA. The polypeptide is Ribonuclease (Chelydra serpentina (Snapping turtle)).